An 87-amino-acid chain; its full sequence is DNA-directed RNA polymerase subunit omega (87 aa).

The protein belongs to the RNA polymerase subunit omega family. The RNAP catalytic core consists of 2 alpha, 1 beta, 1 beta' and 1 omega subunit. When a sigma factor is associated with the core the holoenzyme is formed, which can initiate transcription.

It catalyses the reaction RNA(n) + a ribonucleoside 5'-triphosphate = RNA(n+1) + diphosphate. Promotes RNA polymerase assembly. Latches the N- and C-terminal regions of the beta' subunit thereby facilitating its interaction with the beta and alpha subunits. This is DNA-directed RNA polymerase subunit omega from Pseudomonas entomophila (strain L48).